A 125-amino-acid chain; its full sequence is UPF0251 protein DSY3441 (125 aa).

The protein belongs to the UPF0251 family.

The polypeptide is UPF0251 protein DSY3441 (Desulfitobacterium hafniense (strain Y51)).